The chain runs to 450 residues: ATP-dependent protease ATPase subunit HslU (450 aa).

Residues valine 29, 71–76 (GVGKTE), aspartate 261, glutamate 328, and arginine 400 each bind ATP.

The protein belongs to the ClpX chaperone family. HslU subfamily. As to quaternary structure, a double ring-shaped homohexamer of HslV is capped on each side by a ring-shaped HslU homohexamer. The assembly of the HslU/HslV complex is dependent on binding of ATP.

The protein localises to the cytoplasm. Functionally, ATPase subunit of a proteasome-like degradation complex; this subunit has chaperone activity. The binding of ATP and its subsequent hydrolysis by HslU are essential for unfolding of protein substrates subsequently hydrolyzed by HslV. HslU recognizes the N-terminal part of its protein substrates and unfolds these before they are guided to HslV for hydrolysis. This is ATP-dependent protease ATPase subunit HslU from Rickettsia africae (strain ESF-5).